A 40-amino-acid polypeptide reads, in one-letter code: Photosystem II reaction center protein Y (40 aa).

Residues 5-23 (LVLVASPILLAVGWAGFNI) traverse the membrane as a helical segment.

Belongs to the PsbY family. PSII is composed of 1 copy each of membrane proteins PsbA, PsbB, PsbC, PsbD, PsbE, PsbF, PsbH, PsbI, PsbJ, PsbK, PsbL, PsbM, PsbT, PsbX, PsbY, PsbZ, Psb30/Ycf12, peripheral proteins PsbO, CyanoQ (PsbQ), PsbU, PsbV and a large number of cofactors. It forms dimeric complexes.

The protein localises to the cellular thylakoid membrane. Its function is as follows. Loosely associated component of the core of photosystem II (PSII), it is not always seen in crystals. PSII is a light-driven water plastoquinone oxidoreductase, using light energy to abstract electrons from H(2)O, generating a proton gradient subsequently used for ATP formation. This Synechococcus sp. (strain RCC307) protein is Photosystem II reaction center protein Y.